The chain runs to 191 residues: Threonylcarbamoyl-AMP synthase (191 aa).

In terms of domain architecture, YrdC-like spans 7–191 (QSELNDALKI…FHASTGKRLR (185 aa)).

The protein belongs to the SUA5 family. TsaC subfamily.

It localises to the cytoplasm. The catalysed reaction is L-threonine + hydrogencarbonate + ATP = L-threonylcarbamoyladenylate + diphosphate + H2O. Its function is as follows. Required for the formation of a threonylcarbamoyl group on adenosine at position 37 (t(6)A37) in tRNAs that read codons beginning with adenine. Catalyzes the conversion of L-threonine, HCO(3)(-)/CO(2) and ATP to give threonylcarbamoyl-AMP (TC-AMP) as the acyladenylate intermediate, with the release of diphosphate. The chain is Threonylcarbamoyl-AMP synthase from Psychromonas ingrahamii (strain DSM 17664 / CCUG 51855 / 37).